The sequence spans 419 residues: Putative zinc metalloprotease SPy_1963/M5005_Spy1674 (419 aa).

H18 contacts Zn(2+). E19 is an active-site residue. Residue H22 coordinates Zn(2+). 4 consecutive transmembrane segments (helical) span residues 169 to 191 (LITN…ILLV), 301 to 323 (LAWS…FSLN), 343 to 365 (LESV…LIPI), and 392 to 411 (AYIT…AVTW). One can recognise a PDZ domain in the interval 175–274 (GPMNNFILGI…LKTVAVKPQK (100 aa)).

This sequence belongs to the peptidase M50B family. The cofactor is Zn(2+).

The protein resides in the cell membrane. The sequence is that of Putative zinc metalloprotease SPy_1963/M5005_Spy1674 from Streptococcus pyogenes serotype M1.